A 247-amino-acid chain; its full sequence is Ubiquinone biosynthesis O-methyltransferase (247 aa).

S-adenosyl-L-methionine contacts are provided by Arg-41, Gly-72, Asp-93, and Met-136.

This sequence belongs to the methyltransferase superfamily. UbiG/COQ3 family.

It carries out the reaction a 3-demethylubiquinol + S-adenosyl-L-methionine = a ubiquinol + S-adenosyl-L-homocysteine + H(+). The enzyme catalyses a 3-(all-trans-polyprenyl)benzene-1,2-diol + S-adenosyl-L-methionine = a 2-methoxy-6-(all-trans-polyprenyl)phenol + S-adenosyl-L-homocysteine + H(+). The protein operates within cofactor biosynthesis; ubiquinone biosynthesis. Functionally, O-methyltransferase that catalyzes the 2 O-methylation steps in the ubiquinone biosynthetic pathway. This Bartonella quintana (strain Toulouse) (Rochalimaea quintana) protein is Ubiquinone biosynthesis O-methyltransferase.